Reading from the N-terminus, the 150-residue chain is Small ribosomal subunit protein bS6 (150 aa).

A disordered region spans residues 92–150 (KGINKPAKPKKTFKKTFVARKFSRDDESKTHSTEEPRRANTKSTYKKSTSFSQDNKNKK). Positions 98-109 (AKPKKTFKKTFV) are enriched in basic residues. Basic and acidic residues predominate over residues 113-129 (FSRDDESKTHSTEEPRR). The segment covering 132–141 (TKSTYKKSTS) has biased composition (low complexity).

The protein belongs to the bacterial ribosomal protein bS6 family.

Its function is as follows. Binds together with bS18 to 16S ribosomal RNA. The protein is Small ribosomal subunit protein bS6 of Mycoplasmopsis pulmonis (strain UAB CTIP) (Mycoplasma pulmonis).